Consider the following 88-residue polypeptide: Small ribosomal subunit protein bS20 (88 aa).

A disordered region spans residues 1 to 25 (MANSAQARKRARQATKARAHNASLR). Basic residues predominate over residues 7-19 (ARKRARQATKARA).

This sequence belongs to the bacterial ribosomal protein bS20 family.

In terms of biological role, binds directly to 16S ribosomal RNA. In Azoarcus sp. (strain BH72), this protein is Small ribosomal subunit protein bS20.